The primary structure comprises 702 residues: Elongation factor G (702 aa).

In terms of domain architecture, tr-type G spans 8-290 (SRYRNIGISA…AVIEYLPSPT (283 aa)). GTP-binding positions include 17–24 (AHIDAGKT), 88–92 (DTPGH), and 142–145 (NKMD).

Belongs to the TRAFAC class translation factor GTPase superfamily. Classic translation factor GTPase family. EF-G/EF-2 subfamily.

It localises to the cytoplasm. Functionally, catalyzes the GTP-dependent ribosomal translocation step during translation elongation. During this step, the ribosome changes from the pre-translocational (PRE) to the post-translocational (POST) state as the newly formed A-site-bound peptidyl-tRNA and P-site-bound deacylated tRNA move to the P and E sites, respectively. Catalyzes the coordinated movement of the two tRNA molecules, the mRNA and conformational changes in the ribosome. This Edwardsiella ictaluri (strain 93-146) protein is Elongation factor G.